A 78-amino-acid chain; its full sequence is Small ribosomal subunit protein bS18 (78 aa).

The protein belongs to the bacterial ribosomal protein bS18 family. As to quaternary structure, part of the 30S ribosomal subunit. Forms a tight heterodimer with protein bS6.

Its function is as follows. Binds as a heterodimer with protein bS6 to the central domain of the 16S rRNA, where it helps stabilize the platform of the 30S subunit. This Rhodospirillum rubrum (strain ATCC 11170 / ATH 1.1.1 / DSM 467 / LMG 4362 / NCIMB 8255 / S1) protein is Small ribosomal subunit protein bS18.